The following is a 557-amino-acid chain: Anthrax toxin receptor-like (557 aa).

The N-terminal stretch at 1–25 (MRSHGRWGPCFLLFLLLLPPPLFRA) is a signal peptide. The Extracellular segment spans residues 26–345 (GSLRYHGPGW…KSNVSVTSST (320 aa)). The VWFA domain maps to 74–244 (DLYFILDKSG…KAMRDTVDAL (171 aa)). A divalent metal cation contacts are provided by Ser-82, Ser-84, and Thr-148. The helical transmembrane segment at 346–366 (CGIFSNWLYFLLPLLLLPLLL) threads the bilayer. The Cytoplasmic segment spans residues 367–557 (CCLWRLCRKK…PTSKAPNTQD (191 aa)). 2 disordered regions span residues 380 to 411 (EPPP…LPPP) and 497 to 557 (ESPS…NTQD). Residues 386–395 (KPEKEPEQEK) show a composition bias toward basic and acidic residues. Residues 396–411 (PPPPPPPSPPPPLPPP) are compositionally biased toward pro residues. A compositionally biased stretch (polar residues) spans 534–557 (GTLQNPLCPSLPRSPTSKAPNTQD).

This sequence belongs to the ATR family.

The protein localises to the membrane. The protein is Anthrax toxin receptor-like (ANTXRL) of Macaca fascicularis (Crab-eating macaque).